The primary structure comprises 92 residues: UPF0235 protein CCA_00247 (92 aa).

This sequence belongs to the UPF0235 family.

This is UPF0235 protein CCA_00247 from Chlamydia caviae (strain ATCC VR-813 / DSM 19441 / 03DC25 / GPIC) (Chlamydophila caviae).